Here is a 169-residue protein sequence, read N- to C-terminus: MSVLQVLHIPDERLRKVAKPVEEVNAEIQRIVDDMFETMYAEEGIGLAATQVDIHQRIIVIDVSENRDERLVLINPELLEKSGETGIEEGCLSIPKQRALVPRAEKVKIRALDRDGKPFELEADGLLAICIQHEMDHLVGKLFMDYLSPLKQQRIRQKVEKLDRLKARA.

Fe cation-binding residues include Cys91 and His133. The active site involves Glu134. Position 137 (His137) interacts with Fe cation.

The protein belongs to the polypeptide deformylase family. Requires Fe(2+) as cofactor.

The catalysed reaction is N-terminal N-formyl-L-methionyl-[peptide] + H2O = N-terminal L-methionyl-[peptide] + formate. Functionally, removes the formyl group from the N-terminal Met of newly synthesized proteins. Requires at least a dipeptide for an efficient rate of reaction. N-terminal L-methionine is a prerequisite for activity but the enzyme has broad specificity at other positions. This chain is Peptide deformylase, found in Shigella boydii serotype 18 (strain CDC 3083-94 / BS512).